Reading from the N-terminus, the 578-residue chain is Octopamine receptor 2 (578 aa).

Topologically, residues 1–84 (MMSFPIALFA…YDSITIFITV (84 aa)) are extracellular. N13, N38, N46, and N59 each carry an N-linked (GlcNAc...) asparagine glycan. A helical transmembrane segment spans residues 85-107 (AVVLTLITLWTILGNFFVLMALY). Residues 108–117 (RYGTLRTMSN) lie on the Cytoplasmic side of the membrane. A helical membrane pass occupies residues 118 to 139 (CLIGNLAISDLLLAVTVLPIST). Residues 140–156 (VHDLLGYWVFGEFTCTL) are Extracellular-facing. C154 and C239 are disulfide-bonded. Residues 157–177 (WLCMDVLYCTASIWGLCTVAF) form a helical membrane-spanning segment. Topologically, residues 178–197 (DRYLATVYPVWYHDQRSVRK) are cytoplasmic. Residues 198 to 220 (AVGCIVFVWIFSIVISFAPFIGW) traverse the membrane as a helical segment. Residues 221–251 (QHMIPSFFSFNASIQRYQCILFTSSSYVLYS) are Extracellular-facing. Residue N231 is glycosylated (N-linked (GlcNAc...) asparagine). The chain crosses the membrane as a helical span at residues 252-272 (SMGSFVIPAILMAFMYVRIFV). Residues 273–495 (VLHNQSRGVK…ELREQRATKR (223 aa)) lie on the Cytoplasmic side of the membrane. Residues 496-517 (MLLIMACFCVCWMPFLFMYILR) form a helical membrane-spanning segment. The Extracellular segment spans residues 518 to 531 (SVCDTCHMNQHFVA). The helical transmembrane segment at 532 to 553 (AIIWLGYVNSSLNPVLYTLFND) threads the bilayer. Residues 554–578 (DFKVAFKRLIGARSPSAYRSPGPRR) are Cytoplasmic-facing.

This sequence belongs to the G-protein coupled receptor 1 family.

It is found in the cell membrane. Functionally, receptor for octopamine. Octopamine (OA) is a neurotransmitter, neurohormone, and neuromodulator in invertebrates. This receptor induces a long lasting opening of voltage- independent chloride channels, a process which seems to involve protein phosphorylation but does not require either cAPK or PKC. The rank order of potency for agonists is p-synephrine &gt; p-octopamine &gt; xylometazoline &gt; B-HT920 &gt; norepinephrine = clonidine &gt; epinephrine &gt; p-tyramine &gt; phenylephrine = oxymetazoline = mehoxamine = dopamine &gt; serotonin &gt; histamine. For antagonists, the rank order is rauwolscine = mianserin &gt; phentolamine &gt; chlorpromazine &gt; spiperone &gt; yohimbine &gt; propanolol &gt; alprenolol &gt; prazosine &gt; pindolol. The polypeptide is Octopamine receptor 2 (Lymnaea stagnalis (Great pond snail)).